Here is a 238-residue protein sequence, read N- to C-terminus: ATP-dependent Clp protease proteolytic subunit 4 (238 aa).

S113 (nucleophile) is an active-site residue. Residue H138 is part of the active site.

The protein belongs to the peptidase S14 family. As to quaternary structure, fourteen ClpP subunits assemble into 2 heptameric rings which stack back to back to give a disk-like structure with a central cavity, resembling the structure of eukaryotic proteasomes.

It is found in the cytoplasm. The enzyme catalyses Hydrolysis of proteins to small peptides in the presence of ATP and magnesium. alpha-casein is the usual test substrate. In the absence of ATP, only oligopeptides shorter than five residues are hydrolyzed (such as succinyl-Leu-Tyr-|-NHMec, and Leu-Tyr-Leu-|-Tyr-Trp, in which cleavage of the -Tyr-|-Leu- and -Tyr-|-Trp bonds also occurs).. In terms of biological role, cleaves peptides in various proteins in a process that requires ATP hydrolysis. Has a chymotrypsin-like activity. Plays a major role in the degradation of misfolded proteins. The protein is ATP-dependent Clp protease proteolytic subunit 4 of Frankia casuarinae (strain DSM 45818 / CECT 9043 / HFP020203 / CcI3).